A 468-amino-acid polypeptide reads, in one-letter code: MVDTESPICPLSPLEADDLESPLSEEFLQEMGNIQEISQSIGEESSGSFGFADYQYLGSCPGSEGSVITDTLSPASSPSSVSCPVIPASTDESPGSALNIECRICGDKASGYHYGVHACEGCKGFFRRTIRLKLVYDKCDRSCKIQKKNRNKCQYCRFHKCLSVGMSHNAIRFGRMPRSEKAKLKAEILTCEHDLKDSETADLKSLGKRIHEAYLKNFNMNKVKARVILAGKTSNNPPFVIHDMETLCMAEKTLVAKMVANGVEDKEAEVRFFHCCQCMSVETVTELTEFAKAIPGFANLDLNDQVTLLKYGVYEAIFTMLSSLMNKDGMLIAYGNGFITREFLKNLRKPFCDIMEPKFDFAMKFNALELDDSDISLFVAAIICCGDRPGLLNIGYIEKLQEGIVHVLKLHLQSNHPDDTFLFPKLLQKMVDLRQLVTEHAQLVQVIKKTESDAALHPLLQEIYRDMY.

The nuclear receptor DNA-binding region spans 99–173; that stretch reads NIECRICGDK…VGMSHNAIRF (75 aa). NR C4-type zinc fingers lie at residues 102-122 and 139-161; these read CRIC…CEGC and CDRS…FHKC. An NR LBD domain is found at 239 to 466; sequence FVIHDMETLC…HPLLQEIYRD (228 aa). Residues 304-433 form a required for heterodimerization with RXRA region; the sequence is DQVTLLKYGV…PKLLQKMVDL (130 aa).

This sequence belongs to the nuclear hormone receptor family. NR1 subfamily. As to quaternary structure, heterodimer; with RXRA. This heterodimerization is required for DNA binding and transactivation activity. Interacts with NCOA3 coactivator. Interacts with CITED2; the interaction stimulates its transcriptional activity. Also interacts with PPARBP in vitro. Interacts with AKAP13, LPIN1, PRDM16 and coactivator NCOA6. Interacts with ASXL1 and ASXL2. Interacts with PER2. Interacts with SIRT1; the interaction seems to be modulated by NAD(+) levels. Interacts with CRY1 and CRY2. In hepatocytes, interacts with PAQR3 and HUWE1; the interactions promote PPARA poylubiquitination and HUWE1-mediated degradation. Post-translationally, ubiquitinated by E3 ubiquitin-protein ligase HUWE1; leading to proteasomal degradation. Phosphorylated. In terms of tissue distribution, highly expressed in liver, kidney and heart. Very weakly expressed in brain and testis.

The protein localises to the nucleus. Ligand-activated transcription factor. Key regulator of lipid metabolism. Activated by the endogenous ligand 1-palmitoyl-2-oleoyl-sn-glycerol-3-phosphocholine (16:0/18:1-GPC). Activated by oleylethanolamide, a naturally occurring lipid that regulates satiety. Receptor for peroxisome proliferators such as hypolipidemic drugs and fatty acids. Regulates the peroxisomal beta-oxidation pathway of fatty acids. Functions as a transcription activator for the ACOX1 and P450 genes. Transactivation activity requires heterodimerization with RXRA and is antagonized by NR2C2. May be required for the propagation of clock information to metabolic pathways regulated by PER2. The polypeptide is Peroxisome proliferator-activated receptor alpha (Ppara) (Mus musculus (Mouse)).